The sequence spans 79 residues: MARSRLTATSVSQVQENGFVKKLEPKSGWMTFLEVTGKICEMLFCPEAILLTRKDTPYCETGLIFLTLTKTIANTYFYF.

Expressed in leukocytes, lung, spleen, liver, heart, kidney, muscle and uterine cervix. Down-regulated in cervical cancer.

Its function is as follows. May act as a tumor suppressor. Promotes apoptosis of cancer cells. In Homo sapiens (Human), this protein is Suppressor of tumorigenicity 20 protein (ST20).